The sequence spans 111 residues: Dynein light chain Tctex-type (111 aa).

The protein belongs to the dynein light chain Tctex-type family.

The protein resides in the cytoplasm. It is found in the cytoskeleton. Functionally, acts as a non-catalytic accessory component of a dynein complex. This Schizosaccharomyces pombe (strain 972 / ATCC 24843) (Fission yeast) protein is Dynein light chain Tctex-type (dlc1).